Reading from the N-terminus, the 212-residue chain is 2,3-bisphosphoglycerate-dependent phosphoglycerate mutase (212 aa).

Residues 9–16 (RHGQSEWN), 22–23 (TG), Arg61, 88–91 (ERDY), Lys99, 115–116 (RR), and 159–160 (GN) contribute to the substrate site. Residue His10 is the Tele-phosphohistidine intermediate of the active site. The active-site Proton donor/acceptor is the Glu88.

This sequence belongs to the phosphoglycerate mutase family. BPG-dependent PGAM subfamily. As to quaternary structure, homodimer.

It catalyses the reaction (2R)-2-phosphoglycerate = (2R)-3-phosphoglycerate. It participates in carbohydrate degradation; glycolysis; pyruvate from D-glyceraldehyde 3-phosphate: step 3/5. In terms of biological role, catalyzes the interconversion of 2-phosphoglycerate and 3-phosphoglycerate. The sequence is that of 2,3-bisphosphoglycerate-dependent phosphoglycerate mutase from Methylobacterium radiotolerans (strain ATCC 27329 / DSM 1819 / JCM 2831 / NBRC 15690 / NCIMB 10815 / 0-1).